The chain runs to 188 residues: dCTP deaminase (188 aa).

109-114 is a binding site for dCTP; the sequence is KSTYAR. Glu135 functions as the Proton donor/acceptor in the catalytic mechanism. 3 residues coordinate dCTP: Gln154, Tyr168, and Gln178.

It belongs to the dCTP deaminase family. In terms of assembly, homotrimer.

It catalyses the reaction dCTP + H2O + H(+) = dUTP + NH4(+). The protein operates within pyrimidine metabolism; dUMP biosynthesis; dUMP from dCTP (dUTP route): step 1/2. Its function is as follows. Catalyzes the deamination of dCTP to dUTP. This chain is dCTP deaminase, found in Helicobacter pylori (strain Shi470).